An 803-amino-acid polypeptide reads, in one-letter code: MNAPVQDAEARELALAGMRPRACAKEDARFIQGKGNYVDDIKMPGMLHMDIVRAPIAHGRIKKIHKDAALAMPGVHAVLTAEDLKPLKLHWMPTLAGDVAAVLADEKVHFQMQEVAIVIADDRYIAADAVEAVKVEYDELPVVIDPIDALKPDAPVLREDLAGKTSGAHGPREHHNHIFTWGAGDKAATDAVFANAPVTVSQHMYYPRVHPCPLETCGCVASFDPIKGDLTTYITSQAPHVVRTVVSMLSGIPESKVRIVSPDIGGGFGNKVGIYPGYVCAIVASIVLGRPVKWVEDRVENISTTAFARDYHMDGELAATPDGKILGLRVNVVADHGAFDACADPTKFPAGLFHICSGSYDIPRAHCSVKGVYTNKAPGGVAYRCSFRVTEAVYLIERMVDVLAQKLNMDKAEIRAKNFIRKEQFPYTTQFGFEYDSGDYHTALKKVLDAVDYPAWRAEQAARRADPNSPTLMGIGLVTFTEVVGAGPSKMCDILGVGMFDSCEIRIHPTGSAIARMGTITQGQGHQTTYAQIIATELGIPSEVIQVEEGDTSTAPYGLGTYGSRSTPVAGAAIALAARKIHAKARKIAAHMLEVNENDLDWEVDRFKVKGDDSKFKTMADIAWQAYHQPPAGLEPGLEAVHYYDPPNFTYPFGIYLCVVDIDRATGETKVRRFYALDDCGTRINPMIIEGQIHGGLTEGYAVAMGQQMPFDAQGNLLGNTLMDYFLPTAVETPHWETDHTVTPSPHHPIGAKGVAESPHVGSIPTFTAAVVDAFAHVGVTHLDMPHTSYRVWKSLKEHNLAL.

Arg-384 is subject to 4-hydroxyarginine. Residue Cys-385 coordinates Cu(+). Glu-757 contributes to the Mo-molybdopterin cytosine dinucleotide binding site.

In terms of assembly, dimer of heterotrimers. Each heterotrimer consists of a large, a medium and a small subunit. The cofactor is Cu(+). It depends on Mo-molybdopterin cytosine dinucleotide as a cofactor.

The enzyme catalyses CO + a quinone + H2O = a quinol + CO2. Catalyzes the oxidation of carbon monoxide to carbon dioxide. The protein is Carbon monoxide dehydrogenase large chain (cutL) of Hydrogenophaga pseudoflava (Pseudomonas carboxydoflava).